The chain runs to 141 residues: Large ribosomal subunit protein uL11 (141 aa).

It belongs to the universal ribosomal protein uL11 family. As to quaternary structure, part of the ribosomal stalk of the 50S ribosomal subunit. Interacts with L10 and the large rRNA to form the base of the stalk. L10 forms an elongated spine to which L12 dimers bind in a sequential fashion forming a multimeric L10(L12)X complex. One or more lysine residues are methylated.

Functionally, forms part of the ribosomal stalk which helps the ribosome interact with GTP-bound translation factors. The chain is Large ribosomal subunit protein uL11 from Clostridium botulinum (strain Kyoto / Type A2).